The following is a 55-amino-acid chain: Large ribosomal subunit protein bL32c (55 aa).

The disordered stretch occupies residues 1-24; the sequence is MAVPKKRTSKSKKNARKANWKRKG.

Belongs to the bacterial ribosomal protein bL32 family.

It localises to the plastid. Its subcellular location is the chloroplast. This Phaeodactylum tricornutum (strain CCAP 1055/1) protein is Large ribosomal subunit protein bL32c.